The following is a 264-amino-acid chain: Thiazole synthase (264 aa).

Lys106 (schiff-base intermediate with DXP) is an active-site residue. Residues Gly167, 193–194 (AG), and 215–216 (NS) each bind 1-deoxy-D-xylulose 5-phosphate.

It belongs to the ThiG family. As to quaternary structure, homotetramer. Forms heterodimers with either ThiH or ThiS.

The protein resides in the cytoplasm. The catalysed reaction is [ThiS sulfur-carrier protein]-C-terminal-Gly-aminoethanethioate + 2-iminoacetate + 1-deoxy-D-xylulose 5-phosphate = [ThiS sulfur-carrier protein]-C-terminal Gly-Gly + 2-[(2R,5Z)-2-carboxy-4-methylthiazol-5(2H)-ylidene]ethyl phosphate + 2 H2O + H(+). It functions in the pathway cofactor biosynthesis; thiamine diphosphate biosynthesis. Functionally, catalyzes the rearrangement of 1-deoxy-D-xylulose 5-phosphate (DXP) to produce the thiazole phosphate moiety of thiamine. Sulfur is provided by the thiocarboxylate moiety of the carrier protein ThiS. In vitro, sulfur can be provided by H(2)S. This is Thiazole synthase from Pseudomonas putida (strain W619).